Reading from the N-terminus, the 121-residue chain is NADH-quinone oxidoreductase subunit A 1 (121 aa).

Transmembrane regions (helical) follow at residues 6-26 (FPIF…LSIG), 62-82 (LVAM…PWAV), and 90-110 (FYGL…YYYI).

Belongs to the complex I subunit 3 family. In terms of assembly, NDH-1 is composed of 14 different subunits. Subunits NuoA, H, J, K, L, M, N constitute the membrane sector of the complex.

It is found in the cell inner membrane. The catalysed reaction is a quinone + NADH + 5 H(+)(in) = a quinol + NAD(+) + 4 H(+)(out). Functionally, NDH-1 shuttles electrons from NADH, via FMN and iron-sulfur (Fe-S) centers, to quinones in the respiratory chain. The immediate electron acceptor for the enzyme in this species is believed to be a menaquinone. Couples the redox reaction to proton translocation (for every two electrons transferred, four hydrogen ions are translocated across the cytoplasmic membrane), and thus conserves the redox energy in a proton gradient. The polypeptide is NADH-quinone oxidoreductase subunit A 1 (Chloroherpeton thalassium (strain ATCC 35110 / GB-78)).